The chain runs to 217 residues: Ras-like protein (217 aa).

A GTP-binding site is contributed by 17–24 (GGGGVGKS). The Effector region signature appears at 39 to 47 (YDPTIEDSY). GTP contacts are provided by residues 64–68 (DTAGQ) and 123–126 (NKCD). The tract at residues 181 to 200 (TGRMMTGGGGGGPPGTYAGK) is disordered. Over residues 185-194 (MTGGGGGGPP) the composition is skewed to gly residues. Residues Cys-210 and Cys-211 are each lipidated (S-palmitoyl cysteine). Cys-214 carries the cysteine methyl ester modification. Cys-214 carries S-geranylgeranyl cysteine lipidation. A propeptide spans 215 to 217 (VVL) (removed in mature form).

Belongs to the small GTPase superfamily. Ras family.

It localises to the cell membrane. It carries out the reaction GTP + H2O = GDP + phosphate + H(+). Its activity is regulated as follows. Alternates between an inactive form bound to GDP and an active form bound to GTP. Activated by a guanine nucleotide-exchange factor (GEF) and inactivated by a GTPase-activating protein (GAP). The polypeptide is Ras-like protein (Lentinula edodes (Shiitake mushroom)).